Reading from the N-terminus, the 514-residue chain is Probable peptidoglycan glycosyltransferase FtsW (514 aa).

9 helical membrane passes run 45 to 65, 86 to 106, 108 to 128, 137 to 157, 182 to 202, 218 to 238, 301 to 321, 347 to 367, and 373 to 393; these read IGLI…VTSA, IYIV…MQFW, TANP…LLVG, WLAL…FFFT, VVFF…TVVV, LWQF…LIVF, ILAE…ILWM, VGIW…GILP, and LPLV…VALL. Disordered stretches follow at residues 411–437 and 449–501; these read GDNK…RTKH and DYNQ…AGIK.

It belongs to the SEDS family. FtsW subfamily.

Its subcellular location is the cell inner membrane. The enzyme catalyses [GlcNAc-(1-&gt;4)-Mur2Ac(oyl-L-Ala-gamma-D-Glu-L-Lys-D-Ala-D-Ala)](n)-di-trans,octa-cis-undecaprenyl diphosphate + beta-D-GlcNAc-(1-&gt;4)-Mur2Ac(oyl-L-Ala-gamma-D-Glu-L-Lys-D-Ala-D-Ala)-di-trans,octa-cis-undecaprenyl diphosphate = [GlcNAc-(1-&gt;4)-Mur2Ac(oyl-L-Ala-gamma-D-Glu-L-Lys-D-Ala-D-Ala)](n+1)-di-trans,octa-cis-undecaprenyl diphosphate + di-trans,octa-cis-undecaprenyl diphosphate + H(+). It functions in the pathway cell wall biogenesis; peptidoglycan biosynthesis. Its function is as follows. Peptidoglycan polymerase that is essential for cell division. In Alteromonas naphthalenivorans, this protein is Probable peptidoglycan glycosyltransferase FtsW.